A 109-amino-acid chain; its full sequence is Small ribosomal subunit protein uS15c (109 aa).

This sequence belongs to the universal ribosomal protein uS15 family. Part of the 30S ribosomal subunit.

Its subcellular location is the plastid. The protein resides in the chloroplast. The chain is Small ribosomal subunit protein uS15c (rps15-A) from Trachelium caeruleum (Blue throatwort).